The following is a 110-amino-acid chain: Large ribosomal subunit protein uL22 (110 aa).

The protein belongs to the universal ribosomal protein uL22 family. Part of the 50S ribosomal subunit.

This protein binds specifically to 23S rRNA; its binding is stimulated by other ribosomal proteins, e.g. L4, L17, and L20. It is important during the early stages of 50S assembly. It makes multiple contacts with different domains of the 23S rRNA in the assembled 50S subunit and ribosome. Its function is as follows. The globular domain of the protein is located near the polypeptide exit tunnel on the outside of the subunit, while an extended beta-hairpin is found that lines the wall of the exit tunnel in the center of the 70S ribosome. The protein is Large ribosomal subunit protein uL22 of Baumannia cicadellinicola subsp. Homalodisca coagulata.